The primary structure comprises 108 residues: uncharacterized protein (108 aa).

2 stretches are compositionally biased toward basic and acidic residues: residues 1–15 (MSEAKDNGSRDEVLV) and 53–69 (KLKDRESHQENEDRNSE). The segment at 1–77 (MSEAKDNGSR…SELDQDEEDK (77 aa)) is disordered.

This is an uncharacterized protein from Homo sapiens (Human).